Here is a 157-residue protein sequence, read N- to C-terminus: D-aminoacyl-tRNA deacylase (157 aa).

A Gly-cisPro motif, important for rejection of L-amino acids motif is present at residues 137 to 138; it reads GP.

Belongs to the DTD family. In terms of assembly, homodimer.

Its subcellular location is the cytoplasm. The enzyme catalyses glycyl-tRNA(Ala) + H2O = tRNA(Ala) + glycine + H(+). The catalysed reaction is a D-aminoacyl-tRNA + H2O = a tRNA + a D-alpha-amino acid + H(+). Its function is as follows. An aminoacyl-tRNA editing enzyme that deacylates mischarged D-aminoacyl-tRNAs. Also deacylates mischarged glycyl-tRNA(Ala), protecting cells against glycine mischarging by AlaRS. Acts via tRNA-based rather than protein-based catalysis; rejects L-amino acids rather than detecting D-amino acids in the active site. By recycling D-aminoacyl-tRNA to D-amino acids and free tRNA molecules, this enzyme counteracts the toxicity associated with the formation of D-aminoacyl-tRNA entities in vivo and helps enforce protein L-homochirality. The sequence is that of D-aminoacyl-tRNA deacylase from Cyanothece sp. (strain PCC 7425 / ATCC 29141).